The chain runs to 498 residues: Probable malate:quinone oxidoreductase 2 (498 aa).

The protein belongs to the MQO family. The cofactor is FAD.

The enzyme catalyses (S)-malate + a quinone = a quinol + oxaloacetate. It functions in the pathway carbohydrate metabolism; tricarboxylic acid cycle; oxaloacetate from (S)-malate (quinone route): step 1/1. The sequence is that of Probable malate:quinone oxidoreductase 2 from Staphylococcus epidermidis (strain ATCC 35984 / DSM 28319 / BCRC 17069 / CCUG 31568 / BM 3577 / RP62A).